We begin with the raw amino-acid sequence, 127 residues long: Ribonuclease P protein component (127 aa).

The segment at 99-127 (ALSASLRQQLRDGIDRSARRQEPAAERQR) is disordered. Residues 107–127 (QLRDGIDRSARRQEPAAERQR) are compositionally biased toward basic and acidic residues.

This sequence belongs to the RnpA family. Consists of a catalytic RNA component (M1 or rnpB) and a protein subunit.

The enzyme catalyses Endonucleolytic cleavage of RNA, removing 5'-extranucleotides from tRNA precursor.. Its function is as follows. RNaseP catalyzes the removal of the 5'-leader sequence from pre-tRNA to produce the mature 5'-terminus. It can also cleave other RNA substrates such as 4.5S RNA. The protein component plays an auxiliary but essential role in vivo by binding to the 5'-leader sequence and broadening the substrate specificity of the ribozyme. The protein is Ribonuclease P protein component of Mycobacteroides abscessus (strain ATCC 19977 / DSM 44196 / CCUG 20993 / CIP 104536 / JCM 13569 / NCTC 13031 / TMC 1543 / L948) (Mycobacterium abscessus).